Consider the following 459-residue polypeptide: Friend virus susceptibility protein 1 (459 aa).

Residues 192–269 (EAELPTVLAS…LNSLAHSNRQ (78 aa)) form a disordered region. A compositionally biased stretch (basic and acidic residues) spans 213–223 (SKERTQQDKAD). Over residues 226 to 238 (QIQSSTSLVTSEP) the composition is skewed to polar residues.

Retroviral restriction factor that prevents infection by gammaretroviruses. Acts by interacting with the capsid protein ca after entry of the virus into the cell. This interaction presumably disrupt the capsid thereby inactivating the viral genome, making it unable to enter host nucleus and integrate into host genome. The polypeptide is Friend virus susceptibility protein 1 (Fv1) (Mus musculus (Mouse)).